We begin with the raw amino-acid sequence, 368 residues long: UPF0284 protein SYNPCC7002_A1742 (368 aa).

Belongs to the UPF0284 family.

The chain is UPF0284 protein SYNPCC7002_A1742 from Picosynechococcus sp. (strain ATCC 27264 / PCC 7002 / PR-6) (Agmenellum quadruplicatum).